A 149-amino-acid chain; its full sequence is D-aminoacyl-tRNA deacylase (149 aa).

Positions 137–138 (GP) match the Gly-cisPro motif, important for rejection of L-amino acids motif.

It belongs to the DTD family. Homodimer.

The protein resides in the cytoplasm. The enzyme catalyses glycyl-tRNA(Ala) + H2O = tRNA(Ala) + glycine + H(+). It catalyses the reaction a D-aminoacyl-tRNA + H2O = a tRNA + a D-alpha-amino acid + H(+). Its function is as follows. An aminoacyl-tRNA editing enzyme that deacylates mischarged D-aminoacyl-tRNAs. Also deacylates mischarged glycyl-tRNA(Ala), protecting cells against glycine mischarging by AlaRS. Acts via tRNA-based rather than protein-based catalysis; rejects L-amino acids rather than detecting D-amino acids in the active site. By recycling D-aminoacyl-tRNA to D-amino acids and free tRNA molecules, this enzyme counteracts the toxicity associated with the formation of D-aminoacyl-tRNA entities in vivo and helps enforce protein L-homochirality. This is D-aminoacyl-tRNA deacylase from Desulfitobacterium hafniense (strain DSM 10664 / DCB-2).